Reading from the N-terminus, the 293-residue chain is Large ribosomal subunit protein uL18 (293 aa).

The span at 247–263 shows a compositional bias: basic and acidic residues; that stretch reads IRANPAHEKKQPRDGLV. The tract at residues 247–283 is disordered; sequence IRANPAHEKKQPRDGLVKKRWNRAKMSLKQKRDRVKQ. The segment covering 264 to 283 has biased composition (basic residues); the sequence is KKRWNRAKMSLKQKRDRVKQ.

The protein belongs to the universal ribosomal protein uL18 family. In terms of assembly, component of the large ribosomal subunit (LSU).

The protein localises to the cytoplasm. The protein resides in the nucleus. Functionally, component of the ribosome, a large ribonucleoprotein complex responsible for the synthesis of proteins in the cell. The small ribosomal subunit (SSU) binds messenger RNAs (mRNAs) and translates the encoded message by selecting cognate aminoacyl-transfer RNA (tRNA) molecules. The large subunit (LSU) contains the ribosomal catalytic site termed the peptidyl transferase center (PTC), which catalyzes the formation of peptide bonds, thereby polymerizing the amino acids delivered by tRNAs into a polypeptide chain. The nascent polypeptides leave the ribosome through a tunnel in the LSU and interact with protein factors that function in enzymatic processing, targeting, and the membrane insertion of nascent chains at the exit of the ribosomal tunnel. The protein is Large ribosomal subunit protein uL18 (RPL5) of Suberites domuncula (Sponge).